Consider the following 547-residue polypeptide: Chaperonin GroEL (547 aa).

ATP contacts are provided by residues 30–33, lysine 51, 87–91, glycine 415, 479–481, and aspartate 495; these read TLGP, DGTTT, and NAA. A disordered region spans residues 524 to 547; that stretch reads APKKDEPTPPAAGGGMGGMGGMDF. Residues 535–547 are compositionally biased toward gly residues; the sequence is AGGGMGGMGGMDF.

The protein belongs to the chaperonin (HSP60) family. In terms of assembly, forms a cylinder of 14 subunits composed of two heptameric rings stacked back-to-back. Interacts with the co-chaperonin GroES.

The protein resides in the cytoplasm. It carries out the reaction ATP + H2O + a folded polypeptide = ADP + phosphate + an unfolded polypeptide.. Its function is as follows. Together with its co-chaperonin GroES, plays an essential role in assisting protein folding. The GroEL-GroES system forms a nano-cage that allows encapsulation of the non-native substrate proteins and provides a physical environment optimized to promote and accelerate protein folding. The polypeptide is Chaperonin GroEL (Xylella fastidiosa (strain 9a5c)).